The primary structure comprises 258 residues: Deoxyribose-phosphate aldolase 2 (258 aa).

The Proton donor/acceptor role is filled by Asp102. Lys165 serves as the catalytic Schiff-base intermediate with acetaldehyde. Lys199 (proton donor/acceptor) is an active-site residue.

Belongs to the DeoC/FbaB aldolase family. DeoC type 2 subfamily.

It localises to the cytoplasm. It catalyses the reaction 2-deoxy-D-ribose 5-phosphate = D-glyceraldehyde 3-phosphate + acetaldehyde. It participates in carbohydrate degradation; 2-deoxy-D-ribose 1-phosphate degradation; D-glyceraldehyde 3-phosphate and acetaldehyde from 2-deoxy-alpha-D-ribose 1-phosphate: step 2/2. Its function is as follows. Catalyzes a reversible aldol reaction between acetaldehyde and D-glyceraldehyde 3-phosphate to generate 2-deoxy-D-ribose 5-phosphate. The polypeptide is Deoxyribose-phosphate aldolase 2 (deoC2) (Vibrio vulnificus (strain YJ016)).